The primary structure comprises 55 residues: Ferredoxin (55 aa).

4Fe-4S ferredoxin-type domains lie at 2–27 (YKITDGCINCGACEPECPVEAISESD) and 28–55 (AVRVIDADKCIDCGACANTCPVDAIVEG). 8 residues coordinate [4Fe-4S] cluster: C8, C11, C14, C18, C37, C40, C43, and C47.

It depends on [4Fe-4S] cluster as a cofactor.

Ferredoxins are iron-sulfur proteins that transfer electrons in a wide variety of metabolic reactions. This is Ferredoxin from Clostridium sp. (strain M-E).